We begin with the raw amino-acid sequence, 187 residues long: Signal peptidase I U (187 aa).

The Cytoplasmic portion of the chain corresponds to 1–16 (MNAKTITLKKKRKIKT). A helical transmembrane segment spans residues 17–37 (IVVLSIIMIAALIFTIRLVFY). The Extracellular portion of the chain corresponds to 38-187 (KPFLIEGSSM…YPFGEMRQAK (150 aa)). Residues serine 46 and lysine 88 contribute to the active site.

The protein belongs to the peptidase S26 family.

It localises to the cell membrane. The catalysed reaction is Cleavage of hydrophobic, N-terminal signal or leader sequences from secreted and periplasmic proteins.. The chain is Signal peptidase I U (sipU) from Bacillus subtilis (strain 168).